The following is a 157-amino-acid chain: Class 10 plant pathogenesis-related protein 2F (157 aa).

Aspartate 8 contributes to the trans-zeatin binding site. 3 residues coordinate Ca(2+): proline 32, valine 35, and isoleucine 38. Trans-zeatin is bound by residues glutamate 60, histidine 69, tyrosine 81, and tyrosine 83.

Belongs to the BetVI family.

It is found in the cytoplasm. It localises to the cytosol. In terms of biological role, class II ribonuclease (RNase). Binds to cytokinins. Interacts with melatonin. The sequence is that of Class 10 plant pathogenesis-related protein 2F from Lupinus luteus (European yellow lupine).